The chain runs to 80 residues: Toxin Acra1 (80 aa).

Positions 1-22 (MMKLVLFSIIVILFSLIGSIHG) are cleaved as a signal peptide. Residues 25–80 (VPGNYPLDSSGNKYPCTVLGDNQSCIDVCKKHGVKYGYCYSFKCWCEFLEDKNVSI) enclose the LCN-type CS-alpha/beta domain. 3 disulfide bridges follow: cysteine 40-cysteine 63, cysteine 49-cysteine 68, and cysteine 53-cysteine 70.

Expressed by the venom gland.

The protein localises to the secreted. Its function is as follows. Probable neurotoxin that inhibits ion channels. Is toxic to mice. Is about 2.8% of the total protein in the venom. The protein is Toxin Acra1 of Androctonus crassicauda (Arabian fat-tailed scorpion).